The following is a 290-amino-acid chain: uncharacterized protein (290 aa).

The protein localises to the cytoplasm. This is an uncharacterized protein from Saccharomyces cerevisiae (strain ATCC 204508 / S288c) (Baker's yeast).